Here is a 484-residue protein sequence, read N- to C-terminus: Probable cytochrome P450 555A1 (484 aa).

The helical transmembrane segment at 1 to 21 threads the bilayer; that stretch reads MIIIVIVVFLFYFSFLNLNLN. Residue Cys-432 participates in heme binding.

The protein belongs to the cytochrome P450 family. The cofactor is heme.

The protein localises to the membrane. This Dictyostelium discoideum (Social amoeba) protein is Probable cytochrome P450 555A1 (cyp555A1).